The chain runs to 277 residues: Uridine-cytidine kinase 1 (277 aa).

The segment covering 1–10 has biased composition (gly residues); it reads MASAGGGDCE. A disordered region spans residues 1 to 29; sequence MASAGGGDCEGAGPEADRPHQRPFLIGVS. 30–38 is an ATP binding site; the sequence is GGTASGKST. Positions 87, 115, 120, 169, 178, and 186 each coordinate substrate. Residue Asp-215 coordinates ATP. The interval 246-277 is disordered; sequence RSHKRTFPEPGEHPAVLASGKRSHLESSSRPH. Phosphothreonine is present on Thr-251. Residues 268–277 are compositionally biased toward basic and acidic residues; the sequence is SHLESSSRPH.

Belongs to the uridine kinase family.

It carries out the reaction uridine + ATP = UMP + ADP + H(+). The catalysed reaction is cytidine + ATP = CMP + ADP + H(+). It functions in the pathway pyrimidine metabolism; CTP biosynthesis via salvage pathway; CTP from cytidine: step 1/3. Its pathway is pyrimidine metabolism; UMP biosynthesis via salvage pathway; UMP from uridine: step 1/1. In terms of biological role, phosphorylates uridine and cytidine to uridine monophosphate and cytidine monophosphate. Does not phosphorylate deoxyribonucleosides or purine ribonucleosides. Can use ATP or GTP as a phosphate donor. The protein is Uridine-cytidine kinase 1 (UCK1) of Bos taurus (Bovine).